The sequence spans 122 residues: Acidic phospholipase A2 homolog vipoxin A chain (122 aa).

7 cysteine pairs are disulfide-bonded: Cys-26–Cys-115, Cys-28–Cys-44, Cys-43–Cys-95, Cys-49–Cys-122, Cys-50–Cys-88, Cys-57–Cys-81, and Cys-75–Cys-86.

This sequence belongs to the phospholipase A2 family. Group II subfamily. D49 sub-subfamily. As to quaternary structure, heterodimer of A and B (AC P14420) chains; non-covalently linked. The A chain (acidic) is non-toxic, and increases the toxicity of the B chain (basic). The A chain may act as factor stabilizing the complex structure and hence retaining its toxicity by preventing non-specific binding. Upon binding to the target membranes the A chain may dissociate. As to expression, expressed by the venom gland.

The protein resides in the secreted. Heterodimer: postsynaptic neurotoxin. In terms of biological role, monomer: Acidic phospholipase A2 homolog that is non-toxic. In Vipera ammodytes meridionalis (Eastern sand viper), this protein is Acidic phospholipase A2 homolog vipoxin A chain.